The sequence spans 112 residues: Nucleoid-associated protein FTF0810c (112 aa).

A disordered region spans residues 1–27; sequence MNFDMSKLMQQAQKMQEQMKKAQQERE. Over residues 17-27 the composition is skewed to basic and acidic residues; that stretch reads EQMKKAQQERE.

Belongs to the YbaB/EbfC family. As to quaternary structure, homodimer.

The protein resides in the cytoplasm. It is found in the nucleoid. Functionally, binds to DNA and alters its conformation. May be involved in regulation of gene expression, nucleoid organization and DNA protection. This Francisella tularensis subsp. tularensis (strain FSC 198) protein is Nucleoid-associated protein FTF0810c.